Consider the following 714-residue polypeptide: Methylmalonyl-CoA mutase (714 aa).

Residues Arg-584–Asp-714 enclose the B12-binding domain. Adenosylcob(III)alamin is bound at residue His-597.

Belongs to the methylmalonyl-CoA mutase family. Homodimer. Interacts with ArgK. Adenosylcob(III)alamin is required as a cofactor.

It catalyses the reaction (R)-methylmalonyl-CoA = succinyl-CoA. In terms of biological role, catalyzes the interconversion of succinyl-CoA and methylmalonyl-CoA. Could be part of a pathway that converts succinate to propionate. This is Methylmalonyl-CoA mutase (scpA) from Escherichia coli (strain K12).